The following is a 393-amino-acid chain: Cysteine desulfurase (393 aa).

Pyridoxal 5'-phosphate contacts are provided by residues 76–77, asparagine 155, glutamine 183, and 203–205; these read GT and SAH. Lysine 206 is subject to N6-(pyridoxal phosphate)lysine. Residue threonine 241 coordinates pyridoxal 5'-phosphate. The active-site Cysteine persulfide intermediate is cysteine 328. Cysteine 328 contacts [2Fe-2S] cluster.

This sequence belongs to the class-V pyridoxal-phosphate-dependent aminotransferase family. NifS/IscS subfamily. Homodimer. Pyridoxal 5'-phosphate is required as a cofactor.

It catalyses the reaction (sulfur carrier)-H + L-cysteine = (sulfur carrier)-SH + L-alanine. In terms of biological role, catalyzes the removal of elemental sulfur atoms from cysteine to produce alanine. Seems to participate in the biosynthesis of the nitrogenase metalloclusters by providing the inorganic sulfur required for the Fe-S core formation. This chain is Cysteine desulfurase, found in Bradyrhizobium diazoefficiens (strain JCM 10833 / BCRC 13528 / IAM 13628 / NBRC 14792 / USDA 110).